A 101-amino-acid polypeptide reads, in one-letter code: Apolipoprotein C-II (101 aa).

The first 22 residues, 1-22 (MGTRYFLVGFLILLVLGFEAQG), serve as a signal peptide directing secretion. Residues 66-74 (TVDEKIRDI) are lipid binding. The interval 78–101 (STAAVTTYAGIITDQVFSILSGED) is lipoprotein lipase cofactor.

It belongs to the apolipoprotein C2 family. Proapolipoprotein C-II is synthesized as a sialic acid containing glycoprotein which is subsequently desialylated prior to its proteolytic processing. Post-translationally, proapolipoprotein C-II, the major form found in plasma undergoes proteolytic cleavage of its N-terminal hexapeptide to generate apolipoprotein C-II, which occurs as the minor form in plasma.

The protein resides in the secreted. Component of chylomicrons, very low-density lipoproteins (VLDL), low-density lipoproteins (LDL), and high-density lipoproteins (HDL) in plasma. Plays an important role in lipoprotein metabolism as an activator of lipoprotein lipase. Both proapolipoprotein C-II and apolipoprotein C-II can activate lipoprotein lipase. This Capra hircus aegagrus (Wild goat) protein is Apolipoprotein C-II (APOC2).